The chain runs to 286 residues: 33 kDa chaperonin (286 aa).

Cystine bridges form between cysteine 225/cysteine 227 and cysteine 258/cysteine 261.

This sequence belongs to the HSP33 family. In terms of processing, under oxidizing conditions two disulfide bonds are formed involving the reactive cysteines. Under reducing conditions zinc is bound to the reactive cysteines and the protein is inactive.

It is found in the cytoplasm. Redox regulated molecular chaperone. Protects both thermally unfolding and oxidatively damaged proteins from irreversible aggregation. Plays an important role in the bacterial defense system toward oxidative stress. This is 33 kDa chaperonin from Shewanella sediminis (strain HAW-EB3).